The chain runs to 221 residues: Small ribosomal subunit protein uS3c (221 aa).

The KH type-2 domain maps to Leu39 to Ala109.

Belongs to the universal ribosomal protein uS3 family. In terms of assembly, part of the 30S ribosomal subunit.

The protein localises to the plastid. The protein resides in the chloroplast. In Nephroselmis olivacea (Green alga), this protein is Small ribosomal subunit protein uS3c (rps3).